We begin with the raw amino-acid sequence, 357 residues long: RGG repeats nuclear RNA binding protein C (357 aa).

Position 2 is an N-acetylalanine (Ala-2). The disordered stretch occupies residues 25–232 (SQKVEKAAAA…AEEAEAREMT (208 aa)). Positions 31–45 (AAAAVQPPKAAKFPT) are enriched in low complexity. Composition is skewed to gly residues over residues 63-82 (GGRGGTGGRGGFSRGRGNGG) and 114-128 (SRGGSVGGYRVGGGR). Basic and acidic residues predominate over residues 143-155 (DVERPPRNYDRHS). Positions 159-172 (HGTGMKRNGGGRGN) are enriched in gly residues. Residues 190 to 232 (EVEKSPVAEKQGGEDETPEAKKELTAEEKAQKEAEEAEAREMT) show a composition bias toward basic and acidic residues. Residues 239-299 (ILEEKKKALQ…KDATEKAKKS (61 aa)) enclose the FF domain. The interval 308–357 (PADGKRYNGRGGGSRGRGGRGGRGEGGNQRYAKEAAAPAIGDTAQFPSLG) is disordered. Residues 316–334 (GRGGGSRGRGGRGGRGEGG) are compositionally biased toward gly residues. Ser-355 is subject to Phosphoserine.

It belongs to the SERBP1-HABP4 family.

Its subcellular location is the nucleus. The protein localises to the cytoplasm. It localises to the perinuclear region. Functionally, ribosome-binding protein that acts as a regulator of mRNA translation by promoting ribosome inactivation. Binds RNA. The polypeptide is RGG repeats nuclear RNA binding protein C (Arabidopsis thaliana (Mouse-ear cress)).